An 867-amino-acid polypeptide reads, in one-letter code: cGMP-dependent 3',5'-cGMP phosphodiesterase A (867 aa).

Residues 121–146 (IINSSSSTTDTSKTSPIKKQTSSSSP) are compositionally biased toward low complexity. Disordered stretches follow at residues 121-167 (IINS…SQQQ) and 180-241 (HHHH…STFP). A compositionally biased stretch (pro residues) spans 147 to 160 (PLSPQQQQPPPPLV). Positions 191 to 220 (NDNNNNTTTNNNNIEILEQQQQQQQQQQQQ) are enriched in low complexity. Acidic residues predominate over residues 221–232 (QDEDSTDVDEEF). The phosphodiesterase activity stretch occupies residues 357-503 (STTGFVLWIN…GDTCYDPNRI (147 aa)). Residues H399, H401, and D403 each coordinate a divalent metal cation. Residues 607 to 721 (IFRS…WEMR) and 734 to 851 (VFSR…IFVD) each bind a nucleoside 3',5'-cyclic phosphate.

This sequence belongs to the metallo-beta-lactamase superfamily. cNMP phosphodiesterase family. Requires Mn(2+) as cofactor. Mg(2+) is required as a cofactor. Zn(2+) serves as cofactor.

The protein resides in the cytoplasm. Its subcellular location is the cytosol. The catalysed reaction is 3',5'-cyclic GMP + H2O = GMP + H(+). In terms of biological role, phosphodiesterase specific for cGMP, which is activated by cGMP but not by cAMP. Involved in the degradation of intracellular cGMP, contributes to the control of cGMP signals. The protein is cGMP-dependent 3',5'-cGMP phosphodiesterase A (pdeD) of Dictyostelium discoideum (Social amoeba).